We begin with the raw amino-acid sequence, 196 residues long: Probable malonic semialdehyde reductase RutE (196 aa).

Belongs to the nitroreductase family. HadB/RutE subfamily. FMN serves as cofactor.

The catalysed reaction is 3-hydroxypropanoate + NADP(+) = 3-oxopropanoate + NADPH + H(+). Functionally, may reduce toxic product malonic semialdehyde to 3-hydroxypropionic acid, which is excreted. The protein is Probable malonic semialdehyde reductase RutE of Escherichia coli O139:H28 (strain E24377A / ETEC).